We begin with the raw amino-acid sequence, 58 residues long: Large ribosomal subunit protein bL32 (58 aa).

The protein belongs to the bacterial ribosomal protein bL32 family.

This chain is Large ribosomal subunit protein bL32, found in Synechococcus sp. (strain WH7803).